The following is a 701-amino-acid chain: MDGSHFPMKSTTGEPVSSGKKGKRRKVIKSCAFCRKRKLKCSQARPMCQQCVIRKLPQCVYTEEFNYPLSNTELFEQVPNVALVQKIENLQTLLKENDNNNAKPVYCRSSENPLRSLRTSVLGDNGSRYVFGPTSWKTLSLFEQNKFQTEFQNLWKVLKPLPECTKSQLNENDVVADLPSFPQMESCIKSFFAGPLFGILHIFNQDDILSLLDRLFIRDTTDKNLVILLDLQGNAKDKYNLGIVLQILCLGYYNQDIPSSVSHFLHTLSAASLSSSSSNFVEKLQFFLLSYISVMINCTDGVWDATQGVDLINELCQGCISLGLNDIDKWYLNESEETKQNLRCIWFWALFLDVSTSYDIGNPPSISDDLLDLSIFTAQNFQSPSIDFRRVKLMHDFLDVSRFTTREIHKREMNEKLTTFSLRLIEFIQSNFSPIEHYTNSVYYSDIDPFDILILSRSLSIVASIYNIEMIIAQQSRIIDKNRMVQFLLISISVCVNTMVFHFKEPINDQENVLTEGLKLSIILINPLLIRIVSQVYSLAFNRLIFREKAFLFLIDLDTGKKIQFIKYEEENFDELLTGFDVRTDKFLSFSGTIIRFYEIIDSIFAVNERNKRLLKAVSNFYQLTSTLAFERVSRVLFDKASQARIETEKIWLKKGINMEHFSDLMIEDFINDVWKTFKEISKDLWSIDKKKFYKQYHFDL.

The disordered stretch occupies residues 1–22 (MDGSHFPMKSTTGEPVSSGKKG). Residues 31 to 59 (CAFCRKRKLKCSQARPMCQQCVIRKLPQC) constitute a DNA-binding region (zn(2)-C6 fungal-type).

It localises to the cytoplasm. The protein resides in the nucleus. Its function is as follows. Up-regulates the transcription of the genes for ATP-binding cassette (ABC) transporters YOR1 and PDR15, for major facilitator superfamily transporter AZR1, for pleiotropic drug resistance SNG1, for alpha-glucosidase YJL216C and for YLL056C. This is Transcription factor PDR8 (PDR8) from Saccharomyces cerevisiae (strain ATCC 204508 / S288c) (Baker's yeast).